The chain runs to 318 residues: MPVINLLLLTMSILIAMAFLMLTERKILGYTQLRKGPNIVGPCGLLQPFADALKLFTKEPLKPSTSTTILYIVSPALALTIALLLWTPLPMPNPLINLNLGLLFILATSSLTVYSILWSGWASNSNYALIGTLRAVAQTISYEITLALILLSVLLMSGSFNLSTLITTQEHSWLLLPSWPLALMWFISTLAETNRAPFDLTEGESELVSGFNTEYAAGPFALFFMAEYTNIILMNALTAMIFLGTTFNIHSPELHTTLFTIKTLLLTSLFLWIRSTYPRFRYDQLMHLLWKNFLPLTLALLMWHISMPITTSGIPPQT.

Helical transmembrane passes span 2–22 (PVIN…FLML), 69–89 (ILYI…WTPL), 100–120 (LGLL…LWSG), 146–166 (LALI…STLI), 171–191 (HSWL…STLA), 222–242 (LFFM…AMIF), 253–273 (ELHT…FLWI), and 294–314 (LPLT…TSGI).

The protein belongs to the complex I subunit 1 family. Core subunit of respiratory chain NADH dehydrogenase (Complex I) which is composed of 45 different subunits.

The protein resides in the mitochondrion inner membrane. The enzyme catalyses a ubiquinone + NADH + 5 H(+)(in) = a ubiquinol + NAD(+) + 4 H(+)(out). Its function is as follows. Core subunit of the mitochondrial membrane respiratory chain NADH dehydrogenase (Complex I) which catalyzes electron transfer from NADH through the respiratory chain, using ubiquinone as an electron acceptor. Essential for the catalytic activity and assembly of complex I. This is NADH-ubiquinone oxidoreductase chain 1 (MT-ND1) from Pongo pygmaeus (Bornean orangutan).